The following is a 499-amino-acid chain: Probable cytosol aminopeptidase (499 aa).

Positions 263 and 268 each coordinate Mn(2+). Residue Lys275 is part of the active site. Asp286, Asp345, and Glu347 together coordinate Mn(2+). Residue Arg349 is part of the active site.

It belongs to the peptidase M17 family. Mn(2+) serves as cofactor.

Its subcellular location is the cytoplasm. It catalyses the reaction Release of an N-terminal amino acid, Xaa-|-Yaa-, in which Xaa is preferably Leu, but may be other amino acids including Pro although not Arg or Lys, and Yaa may be Pro. Amino acid amides and methyl esters are also readily hydrolyzed, but rates on arylamides are exceedingly low.. The catalysed reaction is Release of an N-terminal amino acid, preferentially leucine, but not glutamic or aspartic acids.. Functionally, presumably involved in the processing and regular turnover of intracellular proteins. Catalyzes the removal of unsubstituted N-terminal amino acids from various peptides. In Chlamydia trachomatis serovar D (strain ATCC VR-885 / DSM 19411 / UW-3/Cx), this protein is Probable cytosol aminopeptidase (pepA).